The sequence spans 422 residues: Serine--tRNA ligase (422 aa).

238–240 is a binding site for L-serine; sequence TSE. 269-271 lines the ATP pocket; the sequence is RKE. Glutamate 292 contacts L-serine. Residue 356 to 359 coordinates ATP; it reads EISS. Serine 390 serves as a coordination point for L-serine.

It belongs to the class-II aminoacyl-tRNA synthetase family. Type-1 seryl-tRNA synthetase subfamily. As to quaternary structure, homodimer. The tRNA molecule binds across the dimer.

The protein resides in the cytoplasm. It carries out the reaction tRNA(Ser) + L-serine + ATP = L-seryl-tRNA(Ser) + AMP + diphosphate + H(+). It catalyses the reaction tRNA(Sec) + L-serine + ATP = L-seryl-tRNA(Sec) + AMP + diphosphate + H(+). The protein operates within aminoacyl-tRNA biosynthesis; selenocysteinyl-tRNA(Sec) biosynthesis; L-seryl-tRNA(Sec) from L-serine and tRNA(Sec): step 1/1. Its function is as follows. Catalyzes the attachment of serine to tRNA(Ser). Is also able to aminoacylate tRNA(Sec) with serine, to form the misacylated tRNA L-seryl-tRNA(Sec), which will be further converted into selenocysteinyl-tRNA(Sec). The chain is Serine--tRNA ligase from Helicobacter hepaticus (strain ATCC 51449 / 3B1).